The chain runs to 252 residues: Imidazole glycerol phosphate synthase subunit HisF (252 aa).

Active-site residues include aspartate 11 and aspartate 130.

The protein belongs to the HisA/HisF family. As to quaternary structure, heterodimer of HisH and HisF.

It is found in the cytoplasm. It catalyses the reaction 5-[(5-phospho-1-deoxy-D-ribulos-1-ylimino)methylamino]-1-(5-phospho-beta-D-ribosyl)imidazole-4-carboxamide + L-glutamine = D-erythro-1-(imidazol-4-yl)glycerol 3-phosphate + 5-amino-1-(5-phospho-beta-D-ribosyl)imidazole-4-carboxamide + L-glutamate + H(+). It participates in amino-acid biosynthesis; L-histidine biosynthesis; L-histidine from 5-phospho-alpha-D-ribose 1-diphosphate: step 5/9. Its function is as follows. IGPS catalyzes the conversion of PRFAR and glutamine to IGP, AICAR and glutamate. The HisF subunit catalyzes the cyclization activity that produces IGP and AICAR from PRFAR using the ammonia provided by the HisH subunit. This Polynucleobacter necessarius subsp. necessarius (strain STIR1) protein is Imidazole glycerol phosphate synthase subunit HisF.